The chain runs to 635 residues: Probable potassium transport system protein Kup (635 aa).

Helical transmembrane passes span 20 to 40 (MALV…SPLY), 62 to 82 (VLSL…VTII), 111 to 131 (AYVV…DGVI), 149 to 169 (PSLH…VFMV), 180 to 200 (VFGP…IWNI), 223 to 243 (GWHG…GEAL), 259 to 279 (WYFF…ALVL), 292 to 312 (AVPS…AVIA), 349 to 369 (IYVP…VLIF), 377 to 397 (VAYG…LALV), 408 to 428 (WVLP…IANG), and 429 to 449 (AKLL…FTLM).

Belongs to the HAK/KUP transporter (TC 2.A.72) family.

It is found in the cell inner membrane. The enzyme catalyses K(+)(in) + H(+)(in) = K(+)(out) + H(+)(out). Functionally, transport of potassium into the cell. Likely operates as a K(+):H(+) symporter. This Xanthomonas campestris pv. campestris (strain 8004) protein is Probable potassium transport system protein Kup.